The following is a 192-amino-acid chain: Hydrophobin-like protein rodD (192 aa).

3 cysteine pairs are disulfide-bonded: C45/C106, C50/C99, and C107/C112.

Belongs to the fungal hydrophobin family. As to quaternary structure, self-assembles to form functional amyloid fibrils called rodlets. Self-assembly into fibrillar rodlets occurs spontaneously at hydrophobic:hydrophilic interfaces and the rodlets further associate laterally to form amphipathic monolayers.

Its function is as follows. Aerial growth, conidiation, and dispersal of filamentous fungi in the environment rely upon a capability of their secreting small amphipathic proteins called hydrophobins (HPBs) with low sequence identity. Class I can self-assemble into an outermost layer of rodlet bundles on aerial cell surfaces, conferring cellular hydrophobicity that supports fungal growth, development and dispersal; whereas Class II form highly ordered films at water-air interfaces through intermolecular interactions but contribute nothing to the rodlet structure. RodD is a an hydrophobin-like protein that, unlike rodA, is not required for rodlet formation. In Aspergillus fumigatus (strain ATCC MYA-4609 / CBS 101355 / FGSC A1100 / Af293) (Neosartorya fumigata), this protein is Hydrophobin-like protein rodD.